We begin with the raw amino-acid sequence, 819 residues long: Hypoxia-inducible factor 1-alpha (819 aa).

The segment at 1 to 31 is disordered; sequence MEGAAGGEEKKNRMSSERRKEKSRDAARSRR. Residues 1–402 are interaction with TSGA10; sequence MEGAAGGEEK…KEPDALTLLA (402 aa). Residues 7 to 31 are compositionally biased toward basic and acidic residues; sequence GEEKKNRMSSERRKEKSRDAARSRR. In terms of domain architecture, bHLH spans 18 to 71; sequence RRKEKSRDAARSRRSKESEVFYELAHQLPLPHNVSSHLDKASVMRLTISYLRVR. The segment at 22–31 is DNA-binding; that stretch reads KSRDAARSRR. The PAS 1 domain maps to 86–159; it reads KAQMNCFYLK…THRNGPIKKG (74 aa). The interval 171–192 is required for heterodimer formation with ARNT; sequence RMKCTLTSRGRTMNIKSATWKV. A PAS 2 domain is found at 229-299; it reads PHPSNIEIPL…KTHHDMFTKG (71 aa). At serine 248 the chain carries Phosphoserine; by CK1. In terms of domain architecture, PAC spans 303–346; the sequence is TGQYRMLAKRGGYVWVETQATVIYNTKNSQPQCIVCVNYVVSGI. Residues 402-599 form an ODD region; sequence APAAGDTIIS…NPPSVSTAFQ (198 aa). The residue at position 403 (proline 403) is a 4-hydroxyproline. Residues 495 to 518 show a composition bias toward polar residues; the sequence is IQDQPASPSDGSTRQSSPEPNSPS. Positions 495–521 are disordered; that stretch reads IQDQPASPSDGSTRQSSPEPNSPSEYC. Residues 532 to 576 are NTAD; the sequence is FKLELVEKLFAEDTEAKNPFSTQDTDLDLEMLAPYIPMDDDFQLR. N6-acetyllysine; alternate is present on lysine 533. Residue lysine 533 forms a Glycyl lysine isopeptide (Lys-Gly) (interchain with G-Cter in ubiquitin); alternate linkage. Glycyl lysine isopeptide (Lys-Gly) (interchain with G-Cter in ubiquitin) cross-links involve residues lysine 539 and lysine 548. The residue at position 552 (serine 552) is a Phosphoserine; by GSK3-beta. The residue at position 556 (threonine 556) is a Phosphothreonine; by GSK3-beta. 4-hydroxyproline is present on proline 565. Serine 577 bears the Phosphoserine; by PLK3 mark. Residues 577–778 form an ID region; it reads SFDQLSPLES…SDLACRLLGQ (202 aa). The disordered stretch occupies residues 581–685; it reads LSPLESSSPN…SHPRSPNVLS (105 aa). Positions 582-613 are enriched in low complexity; it reads SPLESSSPNPPSVSTAFQQTQLQEPTITTTTT. Residues 614–628 are compositionally biased toward basic and acidic residues; that stretch reads EELKTVTKDSTEDIK. Residues 632–655 are compositionally biased toward low complexity; that stretch reads TSPSSTHTPKETTTATTSSPYSGT. Serine 650 bears the Phosphoserine; by PLK3 mark. The residue at position 702 (lysine 702) is an N6-acetyllysine. A Nuclear localization signal motif is present at residues 711–717; sequence RKRKMEH. A CTAD region spans residues 779 to 819; that stretch reads SMDGSGLPQLTSYDCEVNAPIQGSRNLLQGEELLRALDQVN. The residue at position 793 (cysteine 793) is an S-nitrosocysteine. Residue asparagine 796 is modified to (3S)-3-hydroxyasparagine.

As to quaternary structure, interacts with the ARNT; forms a heterodimer that binds core DNA sequence 5'-TACGTG-3' within the hypoxia response element (HRE) of target gene promoters. Interacts with COPS5; the interaction increases the transcriptional activity of HIF1A through increased stability. Interacts with EP300 (via TAZ-type 1 domains); the interaction is stimulated in response to hypoxia and inhibited by CITED2. Interacts with CREBBP (via TAZ-type 1 domains). Interacts with NCOA1, NCOA2, APEX1 and HSP90. Interacts (hydroxylated within the ODD domain) with VHLL (via beta domain); the interaction, leads to polyubiquitination and subsequent HIF1A proteasomal degradation. During hypoxia, sumoylated HIF1A also binds VHL; the interaction promotes the ubiquitination of HIF1A. Interacts with SENP1; the interaction desumoylates HIF1A resulting in stabilization and activation of transcription. Interacts (via the ODD domain) with NAA10; the interaction appears not to acetylate HIF1A nor have any affect on protein stability, during hypoxia. Interacts with RWDD3; the interaction enhances HIF1A sumoylation. Interacts with TSGA10. Interacts with HIF3A. Interacts with RORA (via the DNA binding domain); the interaction enhances HIF1A transcription under hypoxia through increasing protein stability. Interaction with PSMA7 inhibits the transactivation activity of HIF1A under both normoxic and hypoxia-mimicking conditions. Interacts with USP20. Interacts with RACK1; promotes HIF1A ubiquitination and proteasome-mediated degradation. Interacts (via N-terminus) with USP19. Interacts with SIRT2. Interacts (deacetylated form) with EGLN1. Interacts with CBFA2T3. Interacts with HSP90AA1 and HSP90AB1. Interacts with DCUN1D1; this interaction increases the interaction between VHL and DCUN1D1. Interacts with HIF1AN. S-nitrosylation of Cys-793 may be responsible for increased recruitment of p300 coactivator necessary for transcriptional activity of HIF-1 complex. Post-translationally, acetylation of Lys-533 by ARD1 increases interaction with VHL and stimulates subsequent proteasomal degradation. Deacetylation of Lys-702 by SIRT2 increases its interaction with and hydroxylation by EGLN1 thereby inactivating HIF1A activity by inducing its proteasomal degradation. In terms of processing, requires phosphorylation for DNA-binding. Phosphorylation at Ser-248 by CSNK1D/CK1 represses kinase activity and impairs ARNT binding. Phosphorylation by GSK3-beta and PLK3 promote degradation by the proteasome. The iron and 2-oxoglutarate dependent 3-hydroxylation of asparagine is (S) stereospecific within HIF CTAD domains. Post-translationally, sumoylated; with SUMO1 under hypoxia. Sumoylation is enhanced through interaction with RWDD3. Both sumoylation and desumoylation seem to be involved in the regulation of its stability during hypoxia. Sumoylation can promote either its stabilization or its VHL-dependent degradation by promoting hydroxyproline-independent HIF1A-VHL complex binding, thus leading to HIF1A ubiquitination and proteasomal degradation. Desumoylation by SENP1 increases its stability amd transcriptional activity. There is a disaccord between various publications on the effect of sumoylation and desumoylation on its stability and transcriptional activity. In terms of processing, in normoxia, is hydroxylated on Pro-403 and Pro-565 in the oxygen-dependent degradation domain (ODD) by EGLN1/PHD2 and EGLN2/PHD1. EGLN3/PHD3 has also been shown to hydroxylate Pro-565. The hydroxylated prolines promote interaction with VHL, initiating rapid ubiquitination and subsequent proteasomal degradation. Deubiquitinated by USP20. Under hypoxia, proline hydroxylation is impaired and ubiquitination is attenuated, resulting in stabilization. In normoxia, is hydroxylated on Asn-796 by HIF1AN, thus abrogating interaction with CREBBP and EP300 and preventing transcriptional activation. Repressed by iron ion, via Fe(2+) prolyl hydroxylase (PHD) enzymes-mediated hydroxylation and subsequent proteasomal degradation.

The protein localises to the cytoplasm. It localises to the nucleus. The protein resides in the nucleus speckle. Its activity is regulated as follows. Induced by reactive oxygen species (ROS). Functionally, functions as a master transcriptional regulator of the adaptive response to hypoxia. Under hypoxic conditions, activates the transcription of over 40 genes, including erythropoietin, glucose transporters, glycolytic enzymes, vascular endothelial growth factor, HILPDA, and other genes whose protein products increase oxygen delivery or facilitate metabolic adaptation to hypoxia. Plays an essential role in embryonic vascularization, tumor angiogenesis and pathophysiology of ischemic disease. Heterodimerizes with ARNT; heterodimer binds to core DNA sequence 5'-TACGTG-3' within the hypoxia response element (HRE) of target gene promoters. Activation requires recruitment of transcriptional coactivators such as CREBBP and EP300. Activity is enhanced by interaction with NCOA1 and/or NCOA2. Interaction with redox regulatory protein APEX1 seems to activate CTAD and potentiates activation by NCOA1 and CREBBP. Involved in the axonal distribution and transport of mitochondria in neurons during hypoxia. The sequence is that of Hypoxia-inducible factor 1-alpha (HIF1A) from Eospalax fontanierii baileyi (Plateau zokor).